The sequence spans 311 residues: Protoheme IX farnesyltransferase (311 aa).

9 helical membrane-spanning segments follow: residues V32–N52, P53–L73, F104–W124, F125–L145, I153–G173, F180–F200, K224–G244, L245–A265, and F285–V305.

This sequence belongs to the UbiA prenyltransferase family. Protoheme IX farnesyltransferase subfamily.

It localises to the cell inner membrane. The enzyme catalyses heme b + (2E,6E)-farnesyl diphosphate + H2O = Fe(II)-heme o + diphosphate. Its pathway is porphyrin-containing compound metabolism; heme O biosynthesis; heme O from protoheme: step 1/1. Converts heme B (protoheme IX) to heme O by substitution of the vinyl group on carbon 2 of heme B porphyrin ring with a hydroxyethyl farnesyl side group. The polypeptide is Protoheme IX farnesyltransferase (Bartonella tribocorum (strain CIP 105476 / IBS 506)).